Consider the following 1182-residue polypeptide: MELNKFDALQIGLASPEKIREWSRGEVKKPETINYRTLKPEKDGLFCERIFGPIKDWECHCGKYKRVRYKGIVCDRCGVEVTKSKVRRERMGHIELAAPVSHIWYFKGIPSRMGLILDMSPRALEKVLYFASYLVLDPKETPLLKKQLLNEKEYREAADKYGEESFEAGMGAESIKKLLQEIDLNQLSEELKENLKTSTGQKKVRIIRRLEVVESFRKSTNKPEWMIMDVIPVIPPDLRPMVQLDGGRFATSDLNDLYRRVINRNNRLKKLLDLGAPDIIVRNEKRMLQEAVDALIDNGRRGRPVTGPGNRPLKSLSDMLKGKQGRFRQNLLGKRVDYSGRSVIVVGPDLKMYQCGLPKEMALELFKPFVMKKLVETGAAHNIKSAKRMVERVQNQVWDVLEEVISDHPVMLNRAPTLHRLGIQAFQPILVEGRAIKLHPLACTAYNADFDGDQMAVHVPLSVEAQAESRFLMLAAHNILKPSDGKPVCVPTQDMVLGSYYLTIDKDGVKGEGKAFTNVDEALMAYQLGEIDIHAKIKVRLEKEIDGKMVSGIIETTIGKLIFNESIPQDLGFIDRSIAGNELLLEINFLVGKKNLGGIIDKCYRKHGPTKTSIMLDKIKAKGYHYSTISAITVSTSDMTVPPNKGELMSEAETAVEKIEKMYRRGFISDDERYERVISTWTKTTEKVADALMDNLDRFNPIFMMADSGARGSKSQIKQLAGMRGLMANPSGKIIELPIKASFREGLDVLEYFISTHGARKGNADTALKTADSGYLTRRLVDVSQDVIVRNEDCGATEGFEVSEIKEGNEVIESLSERLIGRYTSEDIIDPTSKEVLVKQNEYIDEDKAIRIEKVGVKKVKIRSVFTCNCKYGVCAKCYGMDMATAEKISMGEAVGIVAAQSIGEPGTQLTMRTFHTGGVAGSDITQGLPRVEELFEARKPKGLAIVSEVSGTVRIEETKKKRIVFIATESGEEVSYDIPFGSSLKVKNGETIGAGDEITEGSVNPHDIIRIKGVNAVKNYLLSEVQKVYRLQGVDINDKHLEVVIRQMTRKVKVEDSGDTELLPGTMIDIFDFRDENKKVEENGGRPAQARVSLLGITKAALATDSFLSAASFQETTRVLTDAAIKGKSDPLVGLKENVTIGKLIPAGTGMNRYKNIEIDPLVTETNADDENFIAEDKIEG.

Zn(2+) contacts are provided by C59, C61, C74, and C77. Mg(2+) contacts are provided by D449, D451, and D453. Residues C794, C868, C875, and C878 each contribute to the Zn(2+) site.

Belongs to the RNA polymerase beta' chain family. The RNAP catalytic core consists of 2 alpha, 1 beta, 1 beta' and 1 omega subunit. When a sigma factor is associated with the core the holoenzyme is formed, which can initiate transcription. Mg(2+) is required as a cofactor. It depends on Zn(2+) as a cofactor.

The catalysed reaction is RNA(n) + a ribonucleoside 5'-triphosphate = RNA(n+1) + diphosphate. Its function is as follows. DNA-dependent RNA polymerase catalyzes the transcription of DNA into RNA using the four ribonucleoside triphosphates as substrates. This chain is DNA-directed RNA polymerase subunit beta', found in Clostridium acetobutylicum (strain ATCC 824 / DSM 792 / JCM 1419 / IAM 19013 / LMG 5710 / NBRC 13948 / NRRL B-527 / VKM B-1787 / 2291 / W).